Reading from the N-terminus, the 574-residue chain is Sulfate adenylyltransferase (574 aa).

An N-terminal region spans residues Met-1 to Tyr-169. The interval Asp-170–Thr-394 is catalytic. Gln-197 contacts sulfate. Residues Gln-197–Asn-200 and Gly-291–His-294 each bind ATP. Active-site residues include Thr-198, Arg-199, and Asn-200. A sulfate-binding site is contributed by Arg-199. Ala-295 provides a ligand contact to sulfate. Val-333 is a binding site for ATP. An allosteric regulation domain; adenylyl-sulfate kinase-like region spans residues Gln-395 to Ala-574. Residues Asp-434 to Arg-437, Arg-451, Ile-477 to Ala-478, and Arg-516 contribute to the 3'-phosphoadenylyl sulfate site.

This sequence in the N-terminal section; belongs to the sulfate adenylyltransferase family. The protein in the C-terminal section; belongs to the APS kinase family. In terms of assembly, homohexamer. Dimer of trimers.

The protein resides in the cytoplasm. It carries out the reaction sulfate + ATP + H(+) = adenosine 5'-phosphosulfate + diphosphate. The protein operates within sulfur metabolism; hydrogen sulfide biosynthesis; sulfite from sulfate: step 1/3. With respect to regulation, allosterically inhibited by 3'-phosphoadenosine 5'-phosphosulfate (PAPS). Its function is as follows. Catalyzes the first intracellular reaction of sulfate assimilation, forming adenosine-5'-phosphosulfate (APS) from inorganic sulfate and ATP. Plays an important role in sulfate activation as a component of the biosynthesis pathway of sulfur-containing amino acids. The chain is Sulfate adenylyltransferase from Aspergillus clavatus (strain ATCC 1007 / CBS 513.65 / DSM 816 / NCTC 3887 / NRRL 1 / QM 1276 / 107).